Reading from the N-terminus, the 478-residue chain is tRNA modification GTPase MnmE (478 aa).

Residues Arg25, Glu82, and Lys135 each coordinate (6S)-5-formyl-5,6,7,8-tetrahydrofolate. Positions 231-400 (GIKVVIAGQP…LRQRLLQVVG (170 aa)) constitute a TrmE-type G domain. Residue Asn241 participates in K(+) binding. Residues 241–246 (NAGKSS), 260–266 (TPIAGTT), and 285–288 (DTAG) each bind GTP. Mg(2+) is bound at residue Ser245. The K(+) site is built by Thr260, Ile262, and Thr265. Thr266 is a binding site for Mg(2+). Residue Lys478 coordinates (6S)-5-formyl-5,6,7,8-tetrahydrofolate.

This sequence belongs to the TRAFAC class TrmE-Era-EngA-EngB-Septin-like GTPase superfamily. TrmE GTPase family. As to quaternary structure, homodimer. Heterotetramer of two MnmE and two MnmG subunits. K(+) is required as a cofactor.

Its subcellular location is the cytoplasm. Exhibits a very high intrinsic GTPase hydrolysis rate. Involved in the addition of a carboxymethylaminomethyl (cmnm) group at the wobble position (U34) of certain tRNAs, forming tRNA-cmnm(5)s(2)U34. This chain is tRNA modification GTPase MnmE, found in Polaromonas sp. (strain JS666 / ATCC BAA-500).